Reading from the N-terminus, the 258-residue chain is Venom plasminogen activator LV-PA (258 aa).

The N-terminal stretch at 1–18 (MVLITVLANLLILQLSYA) is a signal peptide. The propeptide occupies 19 to 24 (QKSSKL). Residues 25–249 (VFGGDECNIN…YTDWIQSIIA (225 aa)) enclose the Peptidase S1 domain. The N-linked (GlcNAc...) asparagine glycan is linked to N44. Residues C50 and C66 are joined by a disulfide bond. Active-site charge relay system residues include H65 and D110. 3 disulfides stabilise this stretch: C142–C210, C174–C189, and C200–C225. The active-site Charge relay system is the S204.

The protein belongs to the peptidase S1 family. Snake venom subfamily. In terms of assembly, monomer. Post-translationally, N-glycosylated. PubMed:17034951 shows that it contains approximately 10% carbohydrates, PubMed:10871053 shows that it contains approximately 20% carbohydrates. In terms of tissue distribution, expressed by the venom gland.

Its subcellular location is the secreted. Its activity is regulated as follows. Inhibited by the serine protease inhibitors NPGB, PMSF, p-aminobenzamidine and aprotinin. Not inhibited by soybean trypsin inhibitor or EDTA. Its function is as follows. Snake venom serine protease that activates plasminogen. Weakly hydrolyzes the alpha chain of human fibrinogen without releasing fibrinopeptide A. Does not hydrolyze plasma kallikrein or factor Xa. Does not clot fibrinogen. Does not affect platelet function. Induces hypotensive effects on rats. Shows a preferential cleavage at Lys-|-Xaa over Arg-|-Xaa bonds. This chain is Venom plasminogen activator LV-PA, found in Lachesis muta muta (Bushmaster).